Reading from the N-terminus, the 580-residue chain is Amino-acid acetyltransferase, mitochondrial (580 aa).

The N-acetyltransferase domain maps to 403–560 (LTMQNLFDDK…NPRHKNGVVN (158 aa)).

It belongs to the acetyltransferase family.

Its subcellular location is the mitochondrion. It catalyses the reaction L-glutamate + acetyl-CoA = N-acetyl-L-glutamate + CoA + H(+). The protein operates within amino-acid biosynthesis; L-arginine biosynthesis; N(2)-acetyl-L-ornithine from L-glutamate: step 1/4. In terms of biological role, N-acetylglutamate synthase involved in arginine biosynthesis. The chain is Amino-acid acetyltransferase, mitochondrial (ARG2) from Candida dubliniensis (strain CD36 / ATCC MYA-646 / CBS 7987 / NCPF 3949 / NRRL Y-17841) (Yeast).